The chain runs to 616 residues: Dihydroxy-acid dehydratase (616 aa).

Aspartate 81 contacts Mg(2+). Position 122 (cysteine 122) interacts with [2Fe-2S] cluster. Residues aspartate 123 and lysine 124 each coordinate Mg(2+). Residue lysine 124 is modified to N6-carboxylysine. Position 195 (cysteine 195) interacts with [2Fe-2S] cluster. Glutamate 491 serves as a coordination point for Mg(2+). Serine 517 functions as the Proton acceptor in the catalytic mechanism.

Belongs to the IlvD/Edd family. Homodimer. Requires [2Fe-2S] cluster as cofactor. Mg(2+) serves as cofactor.

The enzyme catalyses (2R)-2,3-dihydroxy-3-methylbutanoate = 3-methyl-2-oxobutanoate + H2O. It catalyses the reaction (2R,3R)-2,3-dihydroxy-3-methylpentanoate = (S)-3-methyl-2-oxopentanoate + H2O. The protein operates within amino-acid biosynthesis; L-isoleucine biosynthesis; L-isoleucine from 2-oxobutanoate: step 3/4. It functions in the pathway amino-acid biosynthesis; L-valine biosynthesis; L-valine from pyruvate: step 3/4. Functionally, functions in the biosynthesis of branched-chain amino acids. Catalyzes the dehydration of (2R,3R)-2,3-dihydroxy-3-methylpentanoate (2,3-dihydroxy-3-methylvalerate) into 2-oxo-3-methylpentanoate (2-oxo-3-methylvalerate) and of (2R)-2,3-dihydroxy-3-methylbutanoate (2,3-dihydroxyisovalerate) into 2-oxo-3-methylbutanoate (2-oxoisovalerate), the penultimate precursor to L-isoleucine and L-valine, respectively. This chain is Dihydroxy-acid dehydratase, found in Azoarcus sp. (strain BH72).